We begin with the raw amino-acid sequence, 274 residues long: Dermonecrotic toxin SdSicTox-betaIIB1bxii (274 aa).

His-5 is a catalytic residue. Glu-25 and Asp-27 together coordinate Mg(2+). His-41 serves as the catalytic Nucleophile. 2 cysteine pairs are disulfide-bonded: Cys-45-Cys-51 and Cys-47-Cys-190. Residue Asp-85 coordinates Mg(2+).

This sequence belongs to the arthropod phospholipase D family. Class II subfamily. Requires Mg(2+) as cofactor. As to expression, expressed by the venom gland.

The protein resides in the secreted. The catalysed reaction is an N-(acyl)-sphingosylphosphocholine = an N-(acyl)-sphingosyl-1,3-cyclic phosphate + choline. It catalyses the reaction an N-(acyl)-sphingosylphosphoethanolamine = an N-(acyl)-sphingosyl-1,3-cyclic phosphate + ethanolamine. It carries out the reaction a 1-acyl-sn-glycero-3-phosphocholine = a 1-acyl-sn-glycero-2,3-cyclic phosphate + choline. The enzyme catalyses a 1-acyl-sn-glycero-3-phosphoethanolamine = a 1-acyl-sn-glycero-2,3-cyclic phosphate + ethanolamine. Functionally, dermonecrotic toxins cleave the phosphodiester linkage between the phosphate and headgroup of certain phospholipids (sphingolipid and lysolipid substrates), forming an alcohol (often choline) and a cyclic phosphate. This toxin acts on sphingomyelin (SM). It may also act on ceramide phosphoethanolamine (CPE), lysophosphatidylcholine (LPC) and lysophosphatidylethanolamine (LPE), but not on lysophosphatidylserine (LPS), and lysophosphatidylglycerol (LPG). It acts by transphosphatidylation, releasing exclusively cyclic phosphate products as second products. Induces dermonecrosis, hemolysis, increased vascular permeability, edema, inflammatory response, and platelet aggregation. The chain is Dermonecrotic toxin SdSicTox-betaIIB1bxii from Sicarius cf. damarensis (strain GJB-2008) (Six-eyed sand spider).